The primary structure comprises 135 residues: Succinate dehydrogenase assembly factor 3, mitochondrial (135 aa).

Positions 73–101 are disordered; the sequence is KENSNNNDNYNNNNNDNNNDNNNFINIGQ. A compositionally biased stretch (low complexity) spans 75-95; the sequence is NSNNNDNYNNNNNDNNNDNNN.

Belongs to the complex I LYR family. SDHAF3 subfamily. As to quaternary structure, interacts with the iron-sulfur protein subunit within the SDH catalytic dimer.

It localises to the mitochondrion matrix. Plays an essential role in the assembly of succinate dehydrogenase (SDH), an enzyme complex (also referred to as respiratory complex II) that is a component of both the tricarboxylic acid (TCA) cycle and the mitochondrial electron transport chain, and which couples the oxidation of succinate to fumarate with the reduction of ubiquinone (coenzyme Q) to ubiquinol. Promotes maturation of the iron-sulfur protein subunit of the SDH catalytic dimer, protecting it from the deleterious effects of oxidants. May act together with SDHAF1. The chain is Succinate dehydrogenase assembly factor 3, mitochondrial (acn9) from Dictyostelium discoideum (Social amoeba).